A 468-amino-acid chain; its full sequence is Cysteine--tRNA ligase (468 aa).

Residue C33 participates in Zn(2+) binding. The 'HIGH' region motif lies at 35–45 (ATVQGLPHIGH). Zn(2+) contacts are provided by C211, H236, and E240. Positions 267-271 (KMSKS) match the 'KMSKS' region motif. Residue K270 coordinates ATP.

This sequence belongs to the class-I aminoacyl-tRNA synthetase family. Monomer. Zn(2+) is required as a cofactor.

Its subcellular location is the cytoplasm. The enzyme catalyses tRNA(Cys) + L-cysteine + ATP = L-cysteinyl-tRNA(Cys) + AMP + diphosphate. This is Cysteine--tRNA ligase from Mycobacterium ulcerans (strain Agy99).